A 353-amino-acid polypeptide reads, in one-letter code: UPF0283 membrane protein YcjF (353 aa).

The disordered stretch occupies residues 16-35 (KEESTSAFKAQQTFSEAESR). A compositionally biased stretch (polar residues) spans 20–31 (TSAFKAQQTFSE). 3 helical membrane-spanning segments follow: residues 70–90 (MVMG…VQWT), 100–120 (VALG…GSVV), and 213–233 (ESTL…FIAW).

It belongs to the UPF0283 family.

The protein localises to the cell inner membrane. This Salmonella heidelberg (strain SL476) protein is UPF0283 membrane protein YcjF.